Consider the following 592-residue polypeptide: Medium-chain-fatty-acid--[acyl-carrier-protein] ligase JamA (592 aa).

It belongs to the ATP-dependent AMP-binding enzyme family.

The catalysed reaction is a medium-chain fatty acid + holo-[ACP] + ATP = a medium-chain fatty acyl-[ACP] + AMP + diphosphate. It carries out the reaction a medium-chain fatty acid + ATP + H(+) = a medium-chain fatty acyl-AMP + diphosphate. It catalyses the reaction a medium-chain fatty acyl-AMP + holo-[ACP] = a medium-chain fatty acyl-[ACP] + AMP + H(+). Its function is as follows. Ligase involved in the biosynthesis of jamaicamides, which show sodium channel blocking activity and fish toxicity. Initiates jamaicamide biosynthesis by the activation of the starter unit, 5-hexenoic acid, followed by the loading of the activated 5-hexenoic acid onto the acyl carrier protein JamC. In vitro, can also use 5-hexynoic acid, heptanoic acid, butanoic acid, hexanoic acid and benzoic acid. In Moorena producens (strain JHB), this protein is Medium-chain-fatty-acid--[acyl-carrier-protein] ligase JamA.